Reading from the N-terminus, the 375-residue chain is 23S rRNA (uracil(747)-C(5))-methyltransferase RlmC (375 aa).

[4Fe-4S] cluster-binding residues include Cys-3, Cys-11, Cys-14, and Cys-87. Positions 212, 241, 262, and 307 each coordinate S-adenosyl-L-methionine. The active-site Nucleophile is Cys-334.

This sequence belongs to the class I-like SAM-binding methyltransferase superfamily. RNA M5U methyltransferase family. RlmC subfamily.

The enzyme catalyses uridine(747) in 23S rRNA + S-adenosyl-L-methionine = 5-methyluridine(747) in 23S rRNA + S-adenosyl-L-homocysteine + H(+). Functionally, catalyzes the formation of 5-methyl-uridine at position 747 (m5U747) in 23S rRNA. In Escherichia coli O6:H1 (strain CFT073 / ATCC 700928 / UPEC), this protein is 23S rRNA (uracil(747)-C(5))-methyltransferase RlmC.